A 355-amino-acid chain; its full sequence is Galectin-9 (355 aa).

2 consecutive Galectin domains span residues 17-148 (FTGM…ISFQ) and 227-355 (FFTS…HVQT). A beta-D-galactoside-binding positions include Asn48, His61, Arg65, Asn75, 82 to 88 (WGTEERK), His267, Arg271, Thr281, and 287 to 293 (WGSEERS).

It localises to the cytoplasm. It is found in the nucleus. The protein resides in the secreted. Binds galactosides. Has high affinity for the Forssman pentasaccharide. Ligand for HAVCR2/TIM3. Binding to HAVCR2 induces T-helper type 1 lymphocyte (Th1) death. Also stimulates bactericidal activity in infected macrophages by causing macrophage activation and IL1B secretion which restricts intracellular bacterial growth. Ligand for P4HB; the interaction retains P4HB at the cell surface of Th2 T helper cells, increasing disulfide reductase activity at the plasma membrane, altering the plasma membrane redox state and enhancing cell migration. Ligand for CD44; the interaction enhances binding of SMAD3 to the FOXP3 promoter, leading to up-regulation of FOXP3 expression and increased induced regulatory T (iTreg) cell stability and suppressive function. Promotes ability of mesenchymal stromal cells to suppress T-cell proliferation. Expands regulatory T-cells and induces cytotoxic T-cell apoptosis following virus infection. Activates ERK1/2 phosphorylation inducing cytokine (IL-6, IL-8, IL-12) and chemokine (CCL2) production in mast and dendritic cells. Inhibits degranulation and induces apoptosis of mast cells. Induces maturation and migration of dendritic cells. Inhibits natural killer (NK) cell function. Can transform NK cell phenotype from peripheral to decidual during pregnancy. Astrocyte derived galectin-9 enhances microglial TNF production. May play a role in thymocyte-epithelial interactions relevant to the biology of the thymus. May provide the molecular basis for urate flux across cell membranes, allowing urate that is formed during purine metabolism to efflux from cells and serving as an electrogenic transporter that plays an important role in renal and gastrointestinal urate excretion. Highly selective to the anion urate. This Bos taurus (Bovine) protein is Galectin-9 (LGALS9).